The primary structure comprises 101 residues: Small ribosomal subunit protein uS14 (101 aa).

This sequence belongs to the universal ribosomal protein uS14 family. In terms of assembly, part of the 30S ribosomal subunit. Contacts proteins S3 and S10.

Functionally, binds 16S rRNA, required for the assembly of 30S particles and may also be responsible for determining the conformation of the 16S rRNA at the A site. The polypeptide is Small ribosomal subunit protein uS14 (Blochmanniella pennsylvanica (strain BPEN)).